Reading from the N-terminus, the 206-residue chain is Probable thymidylate kinase (206 aa).

Residue 10 to 17 (GIDGSGKS) participates in ATP binding.

Belongs to the thymidylate kinase family.

It catalyses the reaction dTMP + ATP = dTDP + ADP. This chain is Probable thymidylate kinase, found in Methanosarcina mazei (strain ATCC BAA-159 / DSM 3647 / Goe1 / Go1 / JCM 11833 / OCM 88) (Methanosarcina frisia).